The primary structure comprises 273 residues: Endoplasmic reticulum resident protein 27 (273 aa).

The N-terminal stretch at 1–25 is a signal peptide; the sequence is MEAAPSRFMFLLFLLTCELAAEVAA. The Thioredoxin domain maps to 39–152; it reads EPTWLTDVPA…MVTEYNPVTV (114 aa). A glycan (N-linked (GlcNAc...) asparagine) is linked at asparagine 100. The segment at 230–233 is PDIA3-binding site; sequence DEWD. The Prevents secretion from ER motif lies at 270–273; that stretch reads KVEL.

This sequence belongs to the protein disulfide isomerase family. In terms of assembly, interacts with PDIA3.

It is found in the endoplasmic reticulum lumen. In terms of biological role, specifically binds unfolded proteins and may recruit protein disulfide isomerase PDIA3 to unfolded substrates. Binds protein substrates via a hydrophobic pocket in the C-terminal domain. May play a role in the unfolded stress response. This chain is Endoplasmic reticulum resident protein 27 (ERP27), found in Homo sapiens (Human).